The chain runs to 464 residues: UDP-N-acetylmuramate--L-alanine ligase (464 aa).

Glycine 112–threonine 118 lines the ATP pocket.

It belongs to the MurCDEF family.

Its subcellular location is the cytoplasm. The enzyme catalyses UDP-N-acetyl-alpha-D-muramate + L-alanine + ATP = UDP-N-acetyl-alpha-D-muramoyl-L-alanine + ADP + phosphate + H(+). Its pathway is cell wall biogenesis; peptidoglycan biosynthesis. Its function is as follows. Cell wall formation. This is UDP-N-acetylmuramate--L-alanine ligase from Chromobacterium violaceum (strain ATCC 12472 / DSM 30191 / JCM 1249 / CCUG 213 / NBRC 12614 / NCIMB 9131 / NCTC 9757 / MK).